The chain runs to 315 residues: Ribose-phosphate pyrophosphokinase (315 aa).

ATP is bound by residues 41 to 43 and 100 to 101; these read DGE and RQ. Mg(2+) contacts are provided by H134 and D173. K196 is a catalytic residue. Residues R198, D222, and 226 to 230 each bind D-ribose 5-phosphate; that span reads DTAGT.

Belongs to the ribose-phosphate pyrophosphokinase family. Class I subfamily. As to quaternary structure, homohexamer. The cofactor is Mg(2+).

The protein resides in the cytoplasm. The catalysed reaction is D-ribose 5-phosphate + ATP = 5-phospho-alpha-D-ribose 1-diphosphate + AMP + H(+). It participates in metabolic intermediate biosynthesis; 5-phospho-alpha-D-ribose 1-diphosphate biosynthesis; 5-phospho-alpha-D-ribose 1-diphosphate from D-ribose 5-phosphate (route I): step 1/1. Involved in the biosynthesis of the central metabolite phospho-alpha-D-ribosyl-1-pyrophosphate (PRPP) via the transfer of pyrophosphoryl group from ATP to 1-hydroxyl of ribose-5-phosphate (Rib-5-P). The sequence is that of Ribose-phosphate pyrophosphokinase from Bacillus caldolyticus.